We begin with the raw amino-acid sequence, 146 residues long: Large ribosomal subunit protein uL13 (146 aa).

Belongs to the universal ribosomal protein uL13 family. As to quaternary structure, part of the 50S ribosomal subunit.

Functionally, this protein is one of the early assembly proteins of the 50S ribosomal subunit, although it is not seen to bind rRNA by itself. It is important during the early stages of 50S assembly. The sequence is that of Large ribosomal subunit protein uL13 from Sulfurisphaera tokodaii (strain DSM 16993 / JCM 10545 / NBRC 100140 / 7) (Sulfolobus tokodaii).